The following is a 335-amino-acid chain: Lipoyl synthase (335 aa).

Residues 1 to 13 show a composition bias toward polar residues; that stretch reads MTIDTNPESSTPS. The disordered stretch occupies residues 1–29; that stretch reads MTIDTNPESSTPSAPAYNPSEKQKGSAKT. Residues Cys75, Cys80, Cys86, Cys101, Cys105, Cys108, and Ser315 each contribute to the [4Fe-4S] cluster site. The Radical SAM core domain occupies 86-304; it reads CFGKGTATFM…EEEAYKMGFA (219 aa).

The protein belongs to the radical SAM superfamily. Lipoyl synthase family. The cofactor is [4Fe-4S] cluster.

Its subcellular location is the cytoplasm. The enzyme catalyses [[Fe-S] cluster scaffold protein carrying a second [4Fe-4S](2+) cluster] + N(6)-octanoyl-L-lysyl-[protein] + 2 oxidized [2Fe-2S]-[ferredoxin] + 2 S-adenosyl-L-methionine + 4 H(+) = [[Fe-S] cluster scaffold protein] + N(6)-[(R)-dihydrolipoyl]-L-lysyl-[protein] + 4 Fe(3+) + 2 hydrogen sulfide + 2 5'-deoxyadenosine + 2 L-methionine + 2 reduced [2Fe-2S]-[ferredoxin]. Its pathway is protein modification; protein lipoylation via endogenous pathway; protein N(6)-(lipoyl)lysine from octanoyl-[acyl-carrier-protein]: step 2/2. Catalyzes the radical-mediated insertion of two sulfur atoms into the C-6 and C-8 positions of the octanoyl moiety bound to the lipoyl domains of lipoate-dependent enzymes, thereby converting the octanoylated domains into lipoylated derivatives. The sequence is that of Lipoyl synthase from Herminiimonas arsenicoxydans.